The following is a 61-amino-acid chain: Sperm protamine P1 (61 aa).

The interval 1 to 61 (MARYRHSRSR…RYSRRRRRRY (61 aa)) is disordered.

Belongs to the protamine P1 family. As to expression, testis.

Its subcellular location is the nucleus. It localises to the chromosome. In terms of biological role, protamines substitute for histones in the chromatin of sperm during the haploid phase of spermatogenesis. They compact sperm DNA into a highly condensed, stable and inactive complex. The protein is Sperm protamine P1 (PRM1) of Onychogalea fraenata (Bridled nail-tailed wallaby).